The chain runs to 552 residues: Leucine-rich repeat-containing protein 56 (552 aa).

LRR repeat units lie at residues 94–115 (NLIQ…GTSL), 117–138 (HLQV…GSFL), 139–160 (ELKE…CLLE), 161–182 (QLEV…RYLQ), and 186–206 (RLAM…PGPS). 2 disordered regions span residues 348-375 (APLE…AESC) and 401-435 (QQER…PPRL).

Belongs to the LRRC56 family. Interacts with IFT88.

The protein resides in the cell projection. The protein localises to the cilium. Functionally, required for the assembly of dynein arms. The protein is Leucine-rich repeat-containing protein 56 (Lrrc56) of Mus musculus (Mouse).